We begin with the raw amino-acid sequence, 270 residues long: Probable septum site-determining protein MinC (270 aa).

Residues 105-129 are disordered; sequence DRRAPSSKAADEAPVQQAEPAAPAA. The span at 116–129 shows a compositional bias: low complexity; sequence EAPVQQAEPAAPAA.

It belongs to the MinC family. Interacts with MinD and FtsZ.

In terms of biological role, cell division inhibitor that blocks the formation of polar Z ring septums. Rapidly oscillates between the poles of the cell to destabilize FtsZ filaments that have formed before they mature into polar Z rings. Prevents FtsZ polymerization. The polypeptide is Probable septum site-determining protein MinC (Burkholderia pseudomallei (strain 668)).